The primary structure comprises 179 residues: ATP synthase subunit delta (179 aa).

Belongs to the ATPase delta chain family. In terms of assembly, F-type ATPases have 2 components, F(1) - the catalytic core - and F(0) - the membrane proton channel. F(1) has five subunits: alpha(3), beta(3), gamma(1), delta(1), epsilon(1). F(0) has three main subunits: a(1), b(2) and c(10-14). The alpha and beta chains form an alternating ring which encloses part of the gamma chain. F(1) is attached to F(0) by a central stalk formed by the gamma and epsilon chains, while a peripheral stalk is formed by the delta and b chains.

The protein localises to the cell inner membrane. Functionally, f(1)F(0) ATP synthase produces ATP from ADP in the presence of a proton or sodium gradient. F-type ATPases consist of two structural domains, F(1) containing the extramembraneous catalytic core and F(0) containing the membrane proton channel, linked together by a central stalk and a peripheral stalk. During catalysis, ATP synthesis in the catalytic domain of F(1) is coupled via a rotary mechanism of the central stalk subunits to proton translocation. This protein is part of the stalk that links CF(0) to CF(1). It either transmits conformational changes from CF(0) to CF(1) or is implicated in proton conduction. This is ATP synthase subunit delta from Paraburkholderia xenovorans (strain LB400).